A 347-amino-acid chain; its full sequence is Trace amine-associated receptor 4 (347 aa).

Over 1 to 37 (MNSPDLWYSPETQFCFAAANNSCPRKARPALVVCAMY) the chain is Extracellular. An N-linked (GlcNAc...) asparagine glycan is attached at N20. 2 disulfides stabilise this stretch: C23/C187 and C106/C191. A helical membrane pass occupies residues 38–58 (LVMIGAIVMTMLGNMVVIISI). Topologically, residues 59-69 (AHFKQLHSPTN) are cytoplasmic. The helical transmembrane segment at 70-90 (FLILSMATTDFLLSCVVMPFS) threads the bilayer. At 91 to 110 (MVRSIESCWYFGDLFCKVHS) the chain is on the extracellular side. A helical transmembrane segment spans residues 111 to 129 (CCDIMLCTTSIFHLCFISV). Topologically, residues 130–149 (DRHYAVCDPLHYVTQITVGV) are cytoplasmic. The chain crosses the membrane as a helical span at residues 150-170 (VGVFLLISWSVPILFAFGLVF). Residues 171-197 (SELNLIGAEDFVAAIDCTGLCVLIFNK) lie on the Extracellular side of the membrane. The segment at 175–188 (LIGAEDFVAAIDCT) is extracellular Loop 2 (ECL2). The helical transmembrane segment at 198-218 (LWGVLASFIAFFLPGAIMVGI) threads the bilayer. Topologically, residues 219 to 260 (YIHIFTVARKHARKIGPGPRTKRALSESKMKATSGKESKATK) are cytoplasmic. The helical transmembrane segment at 261–281 (TLSIVMGVFVLCWLPFFVLTI) threads the bilayer. Topologically, residues 282–296 (TDPFIGFTTPEDLYN) are extracellular. Residues 297–317 (VFLWLGYFNSTFNPIIYGMFY) traverse the membrane as a helical segment. The Cytoplasmic portion of the chain corresponds to 318–347 (PWFRKALRMIVTGTIFRSDSSTSSLHPAHP).

Belongs to the G-protein coupled receptor 1 family.

It localises to the cell membrane. Functionally, olfactory receptor specific for 2-phenylethylamine, a trace amine present at high concentration in the urine of carnivore species, playing a key role in fear and avoidance responses. 2-phenylethylamine acts as a kairomone in the chemical detection of carnivore odor and triggers fear in rats. This receptor is probably mediated by the G(s)-class of G-proteins which activate adenylate cyclase. This Rattus norvegicus (Rat) protein is Trace amine-associated receptor 4.